The primary structure comprises 129 residues: uncharacterized protein (129 aa).

The first 17 residues, 1-17 (MCPECFFLMLFFCGYRA), serve as a signal peptide directing secretion. The span at 26–36 (SSSSSSSFRSS) shows a compositional bias: low complexity. Residues 26-76 (SSSSSSSFRSSPAYGFSGRPPGGAGCRERSQRSCLRPGGLPSLTRNPGLQR) are disordered.

This is an uncharacterized protein from Escherichia coli O157:H7.